We begin with the raw amino-acid sequence, 513 residues long: Sodium/potassium/calcium exchanger 5 (513 aa).

The N-terminal stretch at 1–35 is a signal peptide; sequence MRTDVFLQRRKRRDVLLSIIALLLLIFAIVHLVFC. Residues 36–78 are Extracellular-facing; that stretch reads AGLSFQGSSSARVRRDLENASECVQPQSSEFPEGFFTVQERKD. The helical transmembrane segment at 79-99 threads the bilayer; the sequence is GGILIYFMIIFYMLLSVSIVC. Residues 100-123 are Cytoplasmic-facing; it reads DEYFLPSLEVISERLGLSQDVAGA. The chain crosses the membrane as a helical span at residues 124–144; the sequence is TFMAAGSSAPELVTAFLGVFV. Residues 145 to 148 lie on the Extracellular side of the membrane; sequence TKGD. A helical membrane pass occupies residues 149–169; the sequence is IGVSTIMGSAVYNLLCICAAC. At 170–181 the chain is on the cytoplasmic side; it reads GLLSSAVGRLSC. A helical transmembrane segment spans residues 182–202; the sequence is WPLFRDCVAYAISVAAVIAII. Residues 203 to 207 lie on the Extracellular side of the membrane; the sequence is SDNRV. A helical membrane pass occupies residues 208 to 228; the sequence is YWYDGACLLLVYGVYVAVLCF. Topologically, residues 229–315 are cytoplasmic; it reads DLRISEYVMQ…KSVFSMPDHD (87 aa). A helical transmembrane segment spans residues 316–336; sequence LKRILWVLSLPVSTLLFVSVP. At 337–350 the chain is on the extracellular side; the sequence is DCRRPFWKNFYMLT. A helical membrane pass occupies residues 351 to 371; the sequence is FLMSAVWISAFTYVLVWMVTI. The Cytoplasmic segment spans residues 372–381; that stretch reads VGETLGIPDT. The chain crosses the membrane as a helical span at residues 382-402; the sequence is VMGMTLLAAGTSIPDTVASVM. The Extracellular portion of the chain corresponds to 403 to 420; it reads VAREGKSDMAMSNIVGSN. A helical transmembrane segment spans residues 421-441; that stretch reads VFDMLCLGLPWFIQTVFVDVG. Over 442–450 the chain is Cytoplasmic; sequence SPVEVNSSG. A helical membrane pass occupies residues 451–471; the sequence is LVFMSCTLLLSIIFLFLAVHI. The Extracellular portion of the chain corresponds to 472–482; sequence NGWKLDWKLGL. The chain crosses the membrane as a helical span at residues 483 to 503; sequence VCLACYILFATLSILYELGII. At 504-513 the chain is on the cytoplasmic side; sequence GNNPIRSCSD.

The protein belongs to the Ca(2+):cation antiporter (CaCA) (TC 2.A.19) family. SLC24A subfamily. As to expression, highly expressed in melanin-producing cells. Colocalizes with melanin biosynthesis marker dct.

Its subcellular location is the golgi apparatus. The protein resides in the trans-Golgi network membrane. The protein localises to the melanosome. The enzyme catalyses Ca(2+)(out) + K(+)(out) + 4 Na(+)(in) = Ca(2+)(in) + K(+)(in) + 4 Na(+)(out). Functionally, calcium, potassium:sodium antiporter that transports 1 Ca(2+) and 1 K(+) to the melanosome in exchange for 4 cytoplasmic Na(+). Involved in pigmentation, possibly by participating in ion transport in melanosomes. Predominant sodium-calcium exchanger in melanocytes. The protein is Sodium/potassium/calcium exchanger 5 (slc24a5) of Danio rerio (Zebrafish).